The sequence spans 398 residues: CCA-adding enzyme (398 aa).

Residues glycine 32 and arginine 35 each coordinate ATP. Residues glycine 32 and arginine 35 each contribute to the CTP site. Mg(2+) is bound by residues aspartate 45 and aspartate 47. Residues arginine 116, aspartate 159, arginine 162, arginine 165, and arginine 168 each contribute to the ATP site. Residues arginine 116, aspartate 159, arginine 162, arginine 165, and arginine 168 each contribute to the CTP site.

Belongs to the tRNA nucleotidyltransferase/poly(A) polymerase family. Bacterial CCA-adding enzyme type 3 subfamily. Homodimer. Requires Mg(2+) as cofactor.

The catalysed reaction is a tRNA precursor + 2 CTP + ATP = a tRNA with a 3' CCA end + 3 diphosphate. The enzyme catalyses a tRNA with a 3' CCA end + 2 CTP + ATP = a tRNA with a 3' CCACCA end + 3 diphosphate. Catalyzes the addition and repair of the essential 3'-terminal CCA sequence in tRNAs without using a nucleic acid template. Adds these three nucleotides in the order of C, C, and A to the tRNA nucleotide-73, using CTP and ATP as substrates and producing inorganic pyrophosphate. tRNA 3'-terminal CCA addition is required both for tRNA processing and repair. Also involved in tRNA surveillance by mediating tandem CCA addition to generate a CCACCA at the 3' terminus of unstable tRNAs. While stable tRNAs receive only 3'-terminal CCA, unstable tRNAs are marked with CCACCA and rapidly degraded. The chain is CCA-adding enzyme from Lactobacillus gasseri (strain ATCC 33323 / DSM 20243 / BCRC 14619 / CIP 102991 / JCM 1131 / KCTC 3163 / NCIMB 11718 / NCTC 13722 / AM63).